The following is a 338-amino-acid chain: Phytanoyl-CoA dioxygenase, peroxisomal (338 aa).

A peroxisome-targeting transit peptide spans 1–30 (MDYTRAGARLQVLLGHLGRPSALQIVAHPV). An N6-succinyllysine mark is found at lysine 59 and lysine 108. Residues lysine 120, methionine 157, 175-177 (HQD), and tryptophan 193 each bind 2-oxoglutarate. The Fe cation site is built by histidine 175 and aspartate 177. 2 positions are modified to N6-succinyllysine: lysine 231 and lysine 252. A Fe cation-binding site is contributed by histidine 264. 2-oxoglutarate contacts are provided by serine 266 and arginine 275.

Belongs to the PhyH family. As to quaternary structure, interacts specifically with FKBP52 and PHYHIP. The cofactor is Fe cation. Requires L-ascorbate as cofactor. ATP serves as cofactor. It depends on Mg(2+) as a cofactor.

The protein localises to the peroxisome. The enzyme catalyses phytanoyl-CoA + 2-oxoglutarate + O2 = 2-hydroxyphytanoyl-CoA + succinate + CO2. It catalyses the reaction 3-methylhexadecanoyl-CoA + 2-oxoglutarate + O2 = 2-hydroxy-3-methylhexadecanoyl-CoA + succinate + CO2. The catalysed reaction is hexadecanoyl-CoA + 2-oxoglutarate + O2 = 2-hydroxyhexadecanoyl-CoA + succinate + CO2. It carries out the reaction octanoyl-CoA + 2-oxoglutarate + O2 = 2-hydroxyoctanoyl-CoA + succinate + CO2. The enzyme catalyses decanoyl-CoA + 2-oxoglutarate + O2 = 2-hydroxydecanoyl-CoA + succinate + CO2. It catalyses the reaction 3-methylbutanoyl-CoA + 2-oxoglutarate + O2 = 2-hydroxy-3-methylbutanoyl-CoA + succinate + CO2. The catalysed reaction is heptadecanoyl-CoA + 2-oxoglutarate + O2 = 2-hydroxyheptadecanoyl-CoA + succinate + CO2. It carries out the reaction eicosanoyl-CoA + 2-oxoglutarate + O2 = 2-hydroxyeicosanoyl-CoA + succinate + CO2. The enzyme catalyses octadecanoyl-CoA + 2-oxoglutarate + O2 = 2-hydroxyoctadecanoyl-CoA + succinate + CO2. It catalyses the reaction dodecanoyl-CoA + 2-oxoglutarate + O2 = 2-hydroxydodecanoyl-CoA + succinate + CO2. The catalysed reaction is tetradecanoyl-CoA + 2-oxoglutarate + O2 = 2-hydroxytetradecanoyl-CoA + succinate + CO2. It carries out the reaction hexanoyl-CoA + 2-oxoglutarate + O2 = 2-hydroxyhexanoyl-CoA + succinate + CO2. The enzyme catalyses butanoyl-CoA + 2-oxoglutarate + O2 = 2-hydroxybutanoyl-CoA + succinate + CO2. It catalyses the reaction 3-methylnonanoyl-CoA + 2-oxoglutarate + O2 = 2-hydroxy-3-methylnonanoyl-CoA + succinate + CO2. The catalysed reaction is 3-methylundecanoyl-CoA + 2-oxoglutarate + O2 = 2-hydroxy-3-methylundecanoyl-CoA + succinate + CO2. It carries out the reaction 3-methyldodecanoyl-CoA + 2-oxoglutarate + O2 = 2-hydroxy-3-methyldodecanoyl-CoA + succinate + CO2. It participates in lipid metabolism; fatty acid metabolism. Functionally, catalyzes the 2-hydroxylation of racemic phytanoyl-CoA and the isomers of 3-methylhexadecanoyl-CoA. Shows activity also towards a variety of other mono-branched 3-methylacyl-CoA esters (with a chain length of at least seven carbon atoms) and straight-chain acyl-CoA esters (with a chain length longer than four carbon atoms). Does not hydroxylate long and very long straight chain acyl-CoAs or 2-methyl-and 4-methyl-branched acyl-CoAs. This chain is Phytanoyl-CoA dioxygenase, peroxisomal (Phyh), found in Rattus norvegicus (Rat).